The following is a 205-amino-acid chain: Cryptic plasmid protein C (205 aa).

Positions 142–205 (THGYSDPDDP…RAGNAGKGRF (64 aa)) are disordered. The segment covering 155–174 (QSMTQAKDLPRNTQEAAQSI) has biased composition (polar residues). Residues 189–205 (QAKKPRRRAGNAGKGRF) show a composition bias toward basic residues.

The sequence is that of Cryptic plasmid protein C (cppC) from Neisseria gonorrhoeae.